Reading from the N-terminus, the 424-residue chain is Histidine--tRNA ligase (424 aa).

It belongs to the class-II aminoacyl-tRNA synthetase family. In terms of assembly, homodimer.

The protein resides in the cytoplasm. It catalyses the reaction tRNA(His) + L-histidine + ATP = L-histidyl-tRNA(His) + AMP + diphosphate + H(+). This is Histidine--tRNA ligase from Escherichia coli (strain 55989 / EAEC).